The sequence spans 312 residues: Bifunctional pinoresinol-lariciresinol reductase 2 (312 aa).

Residues 11-17 (GGTGYIG), Arg-36, and Lys-45 each bind NADP(+). Lys-138 (proton acceptor) is an active-site residue. Arg-142 is a binding site for NADP(+). Residue His-270 coordinates substrate.

Belongs to the NmrA-type oxidoreductase family. Isoflavone reductase subfamily. In terms of assembly, dimer.

The enzyme catalyses (+)-lariciresinol + NADP(+) = (+)-pinoresinol + NADPH + H(+). The catalysed reaction is (-)-secoisolariciresinol + NADP(+) = (+)-lariciresinol + NADPH + H(+). It catalyses the reaction (-)-lariciresinol + NADP(+) = (-)-pinoresinol + NADPH + H(+). Functionally, reductase involved in lignan biosynthesis. Catalyzes the enantioselective sequential conversion of (+)-pinoresinol into (+)-lariciresinol and of (+)-lariciresinol into (-)-secoisolariciresinol. Can also convert with a lower efficiency (-)-pinoresinol into (-)-lariciresinol, but not (-)-lariciresinol into (+)-secoisolariciresinol. Abstracts the 4R-hydride from the NADPH cofactor during catalysis. In Thuja plicata (Western red-cedar), this protein is Bifunctional pinoresinol-lariciresinol reductase 2 (PLR_Tp2).